The primary structure comprises 475 residues: Aspartyl/glutamyl-tRNA(Asn/Gln) amidotransferase subunit B (475 aa).

Belongs to the GatB/GatE family. GatB subfamily. As to quaternary structure, heterotrimer of A, B and C subunits.

The enzyme catalyses L-glutamyl-tRNA(Gln) + L-glutamine + ATP + H2O = L-glutaminyl-tRNA(Gln) + L-glutamate + ADP + phosphate + H(+). It carries out the reaction L-aspartyl-tRNA(Asn) + L-glutamine + ATP + H2O = L-asparaginyl-tRNA(Asn) + L-glutamate + ADP + phosphate + 2 H(+). In terms of biological role, allows the formation of correctly charged Asn-tRNA(Asn) or Gln-tRNA(Gln) through the transamidation of misacylated Asp-tRNA(Asn) or Glu-tRNA(Gln) in organisms which lack either or both of asparaginyl-tRNA or glutaminyl-tRNA synthetases. The reaction takes place in the presence of glutamine and ATP through an activated phospho-Asp-tRNA(Asn) or phospho-Glu-tRNA(Gln). The polypeptide is Aspartyl/glutamyl-tRNA(Asn/Gln) amidotransferase subunit B (Staphylococcus haemolyticus (strain JCSC1435)).